A 297-amino-acid polypeptide reads, in one-letter code: tRNA pseudouridine synthase A (297 aa).

Residue Asp72 is the Nucleophile of the active site. Tyr144 lines the substrate pocket.

It belongs to the tRNA pseudouridine synthase TruA family. In terms of assembly, homodimer.

The catalysed reaction is uridine(38/39/40) in tRNA = pseudouridine(38/39/40) in tRNA. Functionally, formation of pseudouridine at positions 38, 39 and 40 in the anticodon stem and loop of transfer RNAs. In Mycobacterium bovis (strain ATCC BAA-935 / AF2122/97), this protein is tRNA pseudouridine synthase A.